We begin with the raw amino-acid sequence, 520 residues long: MECPHLSSSVCIAPDSAKFPNGSPSSWCCSVCRSNKSPWVCLTCSSVHCGRYVNGHAKKHYEDAQIPLLNHKRSEKQEKAQHTVCMDCSSYSTYCYRCDDFVVNDTKLGLVQKVREHLQNLENSAFTADRHRKRKLLENSSLNSKLLKVNGSTTAICATGLRNLGNTCFMNAILQSLSNIEQFCCYFKELPAVELRNGKTAGRRTYHTRSQGDSNVSLVEEFRKTLCALWQGSQTAFSPESLFYVVWKIMPNFRGYQQQDAHEFMRYLLDHLHLELQGGFNGVSRSAILQENSTLSASNKCCINGASTVVTAIFGGILQNEVNCLICGTESRKFDPFLDLSLDIPSQFRSKRSKNQENGPVCSLRDCLRSFTDLEELDETELYMCHKCKKKQKSTKKFWIQKLPKALCLHLKRFHWTAYLRNKVDTYVQFPLRGLDMKCYLLEPENSGPDSCLYDLAAVVVHHGSGVGSGHYTAYAVHEGRWFHFNDSTVTVTDEETVGKAKAYILFYVERQARAGAEKL.

Met-1 bears the N-acetylmethionine mark. The segment at 1 to 121 adopts a UBP-type zinc-finger fold; that stretch reads MECPHLSSSV…QKVREHLQNL (121 aa). Zn(2+)-binding residues include Cys-3, His-5, Cys-29, Cys-32, Cys-41, Cys-44, Cys-49, His-56, His-60, His-82, Cys-95, and Cys-98. The 353-residue stretch at 159 to 511 folds into the USP domain; it reads TGLRNLGNTC…KAYILFYVER (353 aa). The active-site Nucleophile is Cys-168. His-471 functions as the Proton acceptor in the catalytic mechanism.

Belongs to the peptidase C19 family. USP3 subfamily. Interacts (via UBP-type domain) with H2A; the interaction is less efficient than with monoubiquitinated H2A.

It is found in the nucleus. The protein resides in the cytoplasm. It catalyses the reaction Thiol-dependent hydrolysis of ester, thioester, amide, peptide and isopeptide bonds formed by the C-terminal Gly of ubiquitin (a 76-residue protein attached to proteins as an intracellular targeting signal).. Deubiquitinase that plays a role in several cellular processes including transcriptional regulation, cell cycle progression or innate immunity. In response to DNA damage, deubiquitinates monoubiquitinated target proteins such as histone H2A and H2AX and thereby counteracts RNF168- and RNF8-mediated ubiquitination. In turn, participates in the recruitment of DNA damage repair factors to DNA break sites. Required for proper progression through S phase and subsequent mitotic entry. Acts as a positive regulator of TP53 by deubiquitinating and stabilizing it to promote normal cell proliferation and transformation. Participates in establishing tolerance innate immune memory through non-transcriptional feedback. Mechanistically, negatively regulates TLR-induced NF-kappa-B signaling by targeting and removing the 'Lys-63'-linked polyubiquitin chains on MYD88. Negatively regulates the activation of type I interferon signaling by mediating 'Lys-63'-linked polyubiquitin chains on RIGI and IFIH1. Also deubiquinates ASC/PYCARD, the central adapter mediating the assembly and activation of most inflammasomes, and thereby promotes inflammasome activation. The polypeptide is Ubiquitin carboxyl-terminal hydrolase 3 (Usp3) (Mus musculus (Mouse)).